The sequence spans 188 residues: Ribosome-recycling factor (188 aa).

The protein belongs to the RRF family.

It localises to the cytoplasm. Functionally, responsible for the release of ribosomes from messenger RNA at the termination of protein biosynthesis. May increase the efficiency of translation by recycling ribosomes from one round of translation to another. This is Ribosome-recycling factor from Gluconacetobacter diazotrophicus (strain ATCC 49037 / DSM 5601 / CCUG 37298 / CIP 103539 / LMG 7603 / PAl5).